A 497-amino-acid polypeptide reads, in one-letter code: MISNVPWLTVIVSLPIFAGLMIPILPRNGNRVTRWYTLGICILEFLLITYIFYCHFRIDYQSIQLLETFNWINNIHLHWSLGIDGLSLGLVILTGFATTLATLSAWPITRNTRLFYFLMLIMYGGQIGLFVSRDILLFFFMWEIELIPVYLLLCLWGGKRRLYSATKFVLYTAGGSIFLLVAALTMSFYGSEVPSFNIQDLIHKSYPLSLEVLIYVGFLVAYAVKLPIFPFHTWLPDTHGEAHYSTCMLLAGVLLKMGGYGLIRINLELLTHAHFLLGSWMMLFGAIQIIYASLISMSQRNFKRRIAYSSISHMGFVTIGIGSFTETGINGAILQMISHGLIGAALFFLAGTCYDRTRTYLLDQLGGAAISMPKLFTMFSTLSLASLALPGMSGFVSELLVFLGVVTSNQYSFAFKAGITVLEGIGTVLTPIYLLSMLRQLFYGYRFFDKSNPYSIDLGPRELFILICFLLPILGIGLYPNLILSIGSTEIPSLPLT.

The next 14 membrane-spanning stretches (helical) occupy residues 5–25, 36–56, 88–108, 112–132, 135–155, 168–188, 212–232, 243–263, 275–295, 306–326, 331–351, 387–407, 418–438, and 463–483; these read VPWLTVIVSLPIFAGLMIPIL, YTLGICILEFLLITYIFYCHF, LGLVILTGFATTLATLSAWPI, TRLFYFLMLIMYGGQIGLFVS, ILLFFFMWEIELIPVYLLLCL, FVLYTAGGSIFLLVAALTMSF, VLIYVGFLVAYAVKLPIFPFH, HYSTCMLLAGVLLKMGGYGLI, FLLGSWMMLFGAIQIIYASLI, IAYSSISHMGFVTIGIGSFTE, GAILQMISHGLIGAALFFLAG, LALPGMSGFVSELLVFLGVVT, GITVLEGIGTVLTPIYLLSML, and LFILICFLLPILGIGLYPNLI.

It belongs to the complex I subunit 4 family.

The protein localises to the plastid. Its subcellular location is the chloroplast thylakoid membrane. It catalyses the reaction a plastoquinone + NADH + (n+1) H(+)(in) = a plastoquinol + NAD(+) + n H(+)(out). The enzyme catalyses a plastoquinone + NADPH + (n+1) H(+)(in) = a plastoquinol + NADP(+) + n H(+)(out). The chain is NAD(P)H-quinone oxidoreductase chain 4, chloroplastic from Adiantum capillus-veneris (Maidenhair fern).